A 738-amino-acid polypeptide reads, in one-letter code: NADH dehydrogenase [ubiquinone] iron-sulfur protein 1, mitochondrial (738 aa).

Residues 1-27 constitute a mitochondrion transit peptide; that stretch reads MGLGLLASRALRSSRIIRNSTRTIVST. The 2Fe-2S ferredoxin-type domain maps to 66–144; sequence DVIEVFVDGY…GMKIKTDTPI (79 aa). [2Fe-2S] cluster-binding residues include Cys-100, Cys-111, Cys-114, and Cys-128. Residues 144 to 183 form the 4Fe-4S His(Cys)3-ligated-type domain; that stretch reads IAKKAREGVMEFLLMNHPLDCPICDQGGECDLQDQSMAFG. [4Fe-4S] cluster-binding residues include His-160, Cys-164, Cys-167, Cys-173, Cys-212, Cys-215, Cys-218, and Cys-262. Positions 281–337 constitute a 4Fe-4S Mo/W bis-MGD-type domain; sequence LKGTESIDVTDAVGSNIRIDSRGPEVMRVVPRLNEDINEEWISDKTRFFYDGLKRQR.

The protein belongs to the complex I 75 kDa subunit family. In terms of assembly, complex I is composed of about 45 different subunits. This is a component of the iron-sulfur (IP) fragment of the enzyme. It depends on [2Fe-2S] cluster as a cofactor. [4Fe-4S] cluster serves as cofactor.

The protein localises to the mitochondrion inner membrane. It catalyses the reaction a ubiquinone + NADH + 5 H(+)(in) = a ubiquinol + NAD(+) + 4 H(+)(out). Core subunit of the mitochondrial membrane respiratory chain NADH dehydrogenase (Complex I) that is believed to belong to the minimal assembly required for catalysis. Complex I functions in the transfer of electrons from NADH to the respiratory chain. The immediate electron acceptor for the enzyme is believed to be ubiquinone. This is the largest subunit of complex I and it is a component of the iron-sulfur (IP) fragment of the enzyme. It may form part of the active site crevice where NADH is oxidized. The protein is NADH dehydrogenase [ubiquinone] iron-sulfur protein 1, mitochondrial of Solanum tuberosum (Potato).